We begin with the raw amino-acid sequence, 507 residues long: Archaeal-type glutamate synthase [NADPH] (507 aa).

4Fe-4S ferredoxin-type domains follow at residues 10–39 and 41–70; these read FVVERDDYKCIRCLACVRVCSYGANFYDEN and NRVYTENTKCVGCHFCEAICPTEAITVRKN. Residues Cys-19, Cys-22, Cys-25, Cys-29, Cys-50, Cys-53, Cys-56, and Cys-60 each coordinate [4Fe-4S] cluster.

The protein belongs to the glutamate synthase family. It depends on FMN as a cofactor.

It carries out the reaction 2 L-glutamate + NADP(+) = L-glutamine + 2-oxoglutarate + NADPH + H(+). This Thermotoga maritima (strain ATCC 43589 / DSM 3109 / JCM 10099 / NBRC 100826 / MSB8) protein is Archaeal-type glutamate synthase [NADPH].